Here is a 675-residue protein sequence, read N- to C-terminus: MTRKILVTSALPYANGPIHLGHLVEYIQTDIWARFQRLRGHDCHYVCADDAHGTPIMLKARERGITPEALIAEVGEEHQRDFADFLIEFDNYHTTHSDENRYFAELIYSRLNQAGHIDRKVIKQAYDPKLEMFLPDRYIKGECPRCGAEDQYGDSCEACGATYTPAELKNAVSVVSGERPVERESEHYFFRLQDFEAMLREWASPEHLQAEVANKLAEWFKEGLRSWDISRDAPYFGFRIPDTEDKYFYVWLDAPIGYMASFKHLCERKGLDFDDWWGPDSTAELYHFIGKDIIYFHALFWPAMLHGAGFRKPTEICAHGFLTVNGQKMSKSRGTFIMARTWLDHLNPEYLRYYFAAKLSASVHDLDLSLDDFTQRVNADLVGKLVNIASRCAGFIHKRFEGRLGETLDDPALYRQFTAAGEHIAELYEKREFSRAMREIMALADQANQYVDEQKPWVLAKQEDQADRVQDICTQGLNLFRVLVVYLKPVLPRLAADAEAFLNLPEQCWADAKTPLLDHGIRKFKPLMTRVDPDRVQAMLEDSKKTLQPKGEPQAAEAGPLTSDPIAEQIEIGDFAKVDLRIARIEQAEHVEGADKLLRLQLDLGGETRQVFAGIKQAYRPEDLEGRLTVMAANLKPRKMKFGVSEGMVLAAGPGGSDLYLLEPHQGAQPGMRVK.

The 'HIGH' region signature appears at 12–22; that stretch reads PYANGPIHLGH. Residues Cys143, Cys146, Cys156, and Cys159 each coordinate Zn(2+). The 'KMSKS' region motif lies at 328-332; sequence KMSKS. Lys331 is a binding site for ATP. Residues 574 to 675 enclose the tRNA-binding domain; it reads DFAKVDLRIA…QGAQPGMRVK (102 aa).

The protein belongs to the class-I aminoacyl-tRNA synthetase family. MetG type 1 subfamily. In terms of assembly, homodimer. It depends on Zn(2+) as a cofactor.

Its subcellular location is the cytoplasm. The enzyme catalyses tRNA(Met) + L-methionine + ATP = L-methionyl-tRNA(Met) + AMP + diphosphate. In terms of biological role, is required not only for elongation of protein synthesis but also for the initiation of all mRNA translation through initiator tRNA(fMet) aminoacylation. This is Methionine--tRNA ligase from Alkalilimnicola ehrlichii (strain ATCC BAA-1101 / DSM 17681 / MLHE-1).